We begin with the raw amino-acid sequence, 520 residues long: Maturase K (520 aa).

It belongs to the intron maturase 2 family. MatK subfamily.

It localises to the plastid. Its subcellular location is the chloroplast. Functionally, usually encoded in the trnK tRNA gene intron. Probably assists in splicing its own and other chloroplast group II introns. The protein is Maturase K of Beaucarnea recurvata (Elephant-foot tree).